An 89-amino-acid chain; its full sequence is Small ribosomal subunit protein uS15 (89 aa).

The protein belongs to the universal ribosomal protein uS15 family. In terms of assembly, part of the 30S ribosomal subunit. Forms a bridge to the 50S subunit in the 70S ribosome, contacting the 23S rRNA.

In terms of biological role, one of the primary rRNA binding proteins, it binds directly to 16S rRNA where it helps nucleate assembly of the platform of the 30S subunit by binding and bridging several RNA helices of the 16S rRNA. Forms an intersubunit bridge (bridge B4) with the 23S rRNA of the 50S subunit in the ribosome. In Caulobacter sp. (strain K31), this protein is Small ribosomal subunit protein uS15.